A 428-amino-acid polypeptide reads, in one-letter code: Glutamate-1-semialdehyde 2,1-aminomutase (428 aa).

Lysine 267 carries the post-translational modification N6-(pyridoxal phosphate)lysine.

Belongs to the class-III pyridoxal-phosphate-dependent aminotransferase family. HemL subfamily. In terms of assembly, homodimer. Pyridoxal 5'-phosphate serves as cofactor.

The protein localises to the cytoplasm. The catalysed reaction is (S)-4-amino-5-oxopentanoate = 5-aminolevulinate. It functions in the pathway porphyrin-containing compound metabolism; protoporphyrin-IX biosynthesis; 5-aminolevulinate from L-glutamyl-tRNA(Glu): step 2/2. It participates in porphyrin-containing compound metabolism; chlorophyll biosynthesis. This is Glutamate-1-semialdehyde 2,1-aminomutase from Prochlorococcus marinus (strain NATL1A).